The sequence spans 409 residues: Bone morphogenetic protein 4 (409 aa).

Residues 1–24 (MIPGNRMLMVVLLCQVLLGGASHA) form the signal peptide. A propeptide spanning residues 25 to 293 (SLIPETGKKK…ALTRRRRAKR (269 aa)) is cleaved from the precursor. Phosphoserine is present on serine 91. N-linked (GlcNAc...) asparagine glycosylation is found at asparagine 144 and asparagine 209. The interval 284-308 (ALTRRRRAKRSPKHHPQRARKKNKN) is disordered. Cystine bridges form between cysteine 309–cysteine 374, cysteine 338–cysteine 406, and cysteine 342–cysteine 408. Residues asparagine 351 and asparagine 366 are each glycosylated (N-linked (GlcNAc...) asparagine).

It belongs to the TGF-beta family. As to quaternary structure, homodimer; disulfide-linked. Interacts with GREM2. Part of a complex consisting of TWSG1 and CHRD. Interacts with the serine proteases, HTRA1 and HTRA3; the interaction with either inhibits BMP4-mediated signaling. The HTRA protease activity is required for this inhibition. Interacts with SOSTDC1. Interacts with FBN1 (via N-terminal domain) and FBN2. Interacts with type I receptor BMPR1A. Interacts with type II receptor BMPR2. Interacts with FSTL1; this interaction inhibits the activation of the BMP4/Smad1/5/8 signaling pathway. Interacts with SCUBE3. Interacts with TGFBR3.

The protein resides in the secreted. The protein localises to the extracellular space. It localises to the extracellular matrix. Functionally, growth factor of the TGF-beta superfamily that plays essential roles in many developmental processes, including neurogenesis, vascular development, angiogenesis and osteogenesis. Acts in concert with PTHLH/PTHRP to stimulate ductal outgrowth during embryonic mammary development and to inhibit hair follicle induction. Initiates the canonical BMP signaling cascade by associating with type I receptor BMPR1A and type II receptor BMPR2. Once all three components are bound together in a complex at the cell surface, BMPR2 phosphorylates and activates BMPR1A. In turn, BMPR1A propagates signal by phosphorylating SMAD1/5/8 that travel to the nucleus and act as activators and repressors of transcription of target genes. Positively regulates the expression of odontogenic development regulator MSX1 via inducing the IPO7-mediated import of SMAD1 to the nucleus. Required for MSX1-mediated mesenchymal molar tooth bud development beyond the bud stage, via promoting Wnt signaling. Acts as a positive regulator of odontoblast differentiation during mesenchymal tooth germ formation, expression is repressed during the bell stage by MSX1-mediated inhibition of CTNNB1 signaling. Able to induce its own expression in dental mesenchymal cells and also in the neighboring dental epithelial cells via an MSX1-mediated pathway. Can also signal through non-canonical BMP pathways such as ERK/MAP kinase, PI3K/Akt, or SRC cascades. For example, induces SRC phosphorylation which, in turn, activates VEGFR2, leading to an angiogenic response. This Bos taurus (Bovine) protein is Bone morphogenetic protein 4.